A 416-amino-acid chain; its full sequence is Keratin, type I cuticular Ha1 (416 aa).

The tract at residues 1-56 (MPYNFCLPSLSCRTSCSSRPCVPPSCHSCTLPGACNIPANVSNCNWFCEGSFNGSE) is head. Residues 56 to 367 (EKETMQFLND…SLLESEDCNL (312 aa)) form the IF rod domain. The segment at 57-91 (KETMQFLNDRLASYLEKVRQLERDNAELENLIRER) is coil 1A. The interval 92–102 (SQQQEPLLCPS) is linker 1. The interval 103–203 (YQSYFKTIEE…HEQEVNTLRC (101 aa)) is coil 1B. The tract at residues 204–219 (QLGDRLNVEVDAAPTV) is linker 12. Positions 220–363 (DLNRVLNETR…NTYRSLLESE (144 aa)) are coil 2. A tail region spans residues 364–416 (DCNLPSNPCATTNACSKPIGPCLSNPCTSCVPPAPCTPCAPRPRCGPCNSFVR).

Belongs to the intermediate filament family. Present in scalp but not in hairless skin. Abundantly expressed in the differentiating cortex of growing (anagen) hair. Expression is restricted to the keratinocytes of the hair cortex and is absent from inner root sheath and medulla.

In Homo sapiens (Human), this protein is Keratin, type I cuticular Ha1 (KRT31).